The chain runs to 399 residues: Protein phosphatase 2C 37 (399 aa).

In terms of domain architecture, PPM-type phosphatase spans 104-389 (KIGTTSVCGR…DNVSVVVVDL (286 aa)). The Mn(2+) site is built by Asp-142 and Gly-143. The Zn(2+) site is built by Cys-146, His-148, Cys-208, and Cys-210. Mn(2+) is bound by residues Asp-327, Asp-331, and Asp-380.

The protein belongs to the PP2C family. In terms of assembly, interacts with AKT2/AKT3. Interacts with ABA-bounded PYR1, PYL1, PYL2, PYL3, PYL4, PYL9 and PYL12, and with free PYL2, PYL3, PYL4 and PYL13. Binds to and inactivates SLAC1 and SRK2E. The inactivation of SRK2E does not require phosphatase activity. Interacts with CBL1, CBL2, CBL3, CBL5, and CBL7, but not CBL4, CBL6, and CBL9. Interacts with RGLG1 and RGLG5. Interacts with KIN10. Requires Mg(2+) as cofactor. Mn(2+) serves as cofactor. Post-translationally, ubiquitinated by RGLG1 and RGLG5 in response to abscisic acid (ABA). Ubiquitination of PP2CA leads to its degradation by the proteasome. Mostly expressed in seeds and leaves, and, to a lower extent, in roots, stems, and flowers, particularly in siliques. Essentially found in the phloem.

The catalysed reaction is O-phospho-L-seryl-[protein] + H2O = L-seryl-[protein] + phosphate. It carries out the reaction O-phospho-L-threonyl-[protein] + H2O = L-threonyl-[protein] + phosphate. Repressed by PYR/PYL/RCAR ABA receptors in an ABA-dependent manner. In terms of biological role, major negative regulator of abscisic acid (ABA) responses during seed germination and cold acclimation. Confers insensitivity to ABA. Modulates negatively the AKT2/3 activity, which mediates K(+) transport and membrane polarization during stress situations, probably by dephosphorylation. Prevents stomata closure by inactivating the S-type anion efflux channel SLAC1 and its activator SRK2E. Represses KIN10 activity by the specific dephosphorylation of its T-loop Thr-198, leading to a poststress inactivation of SnRK1 signaling. In Arabidopsis thaliana (Mouse-ear cress), this protein is Protein phosphatase 2C 37 (PP2CA).